Consider the following 46-residue polypeptide: Sperm protamine P1 (46 aa).

Belongs to the protamine P1 family. In terms of tissue distribution, testis.

It localises to the nucleus. The protein localises to the chromosome. Its function is as follows. Protamines substitute for histones in the chromatin of sperm during the haploid phase of spermatogenesis. They compact sperm DNA into a highly condensed, stable and inactive complex. This chain is Sperm protamine P1 (PRM1), found in Glauconycteris beatrix (Beatrix's bat).